The chain runs to 101 residues: NADH-quinone oxidoreductase subunit K (101 aa).

3 helical membrane-spanning segments follow: residues 4–24 (LSHY…GIFL), 30–50 (IILL…FVAF), and 61–81 (IFVF…LAIL).

The protein belongs to the complex I subunit 4L family. As to quaternary structure, NDH-1 is composed of 14 different subunits. Subunits NuoA, H, J, K, L, M, N constitute the membrane sector of the complex.

It localises to the cell inner membrane. It catalyses the reaction a quinone + NADH + 5 H(+)(in) = a quinol + NAD(+) + 4 H(+)(out). In terms of biological role, NDH-1 shuttles electrons from NADH, via FMN and iron-sulfur (Fe-S) centers, to quinones in the respiratory chain. The immediate electron acceptor for the enzyme in this species is believed to be ubiquinone. Couples the redox reaction to proton translocation (for every two electrons transferred, four hydrogen ions are translocated across the cytoplasmic membrane), and thus conserves the redox energy in a proton gradient. In Nitrosomonas europaea (strain ATCC 19718 / CIP 103999 / KCTC 2705 / NBRC 14298), this protein is NADH-quinone oxidoreductase subunit K.